A 428-amino-acid chain; its full sequence is MKIATIKTGLASLAMLPGLVMAAPAVADKADNAFMMICTALVLFMTIPGIALFYGGLIRGKNVLSMLTQVTVTFALVCILWVVYGYSLAFGEGNNFFGNINWLMLKNIELTAVMGSIYQYIHVAFQGSFACITVGLIVGALAERIRFSAVLIFVVVWLTLSYIPIAHMVWGGGLLASHGALDFAGGTVVHINAAIAGLVGAYLIGKRVGFGKEAFKPHNLPMVFTGTAILYIGWFGFNAGSAGTANEIAALAFVNTVVATAAAILGWIFGEWALRGKPSLLGACSGAIAGLVGVTPACGYIGVGGALIIGVVAGLAGLWGVTMLKRLLRVDDPCDVFGVHGVCGIVGCIMTGIFAASSLGGVGFAEGVTMGHQLLVQLESIAITIVWSGVVAFIGYKLADLTVGLRVPEEQEREGLDVNSHGENAYNA.

The N-terminal stretch at 1 to 22 (MKIATIKTGLASLAMLPGLVMA) is a signal peptide. Over 23–32 (APAVADKADN) the chain is Periplasmic. A helical membrane pass occupies residues 33–54 (AFMMICTALVLFMTIPGIALFY). Residues 55 to 65 (GGLIRGKNVLS) lie on the Cytoplasmic side of the membrane. Residues 66–90 (MLTQVTVTFALVCILWVVYGYSLAF) form a helical membrane-spanning segment. The Periplasmic segment spans residues 91–119 (GEGNNFFGNINWLMLKNIELTAVMGSIYQ). A helical transmembrane segment spans residues 120-142 (YIHVAFQGSFACITVGLIVGALA). At 143–146 (ERIR) the chain is on the cytoplasmic side. The helical transmembrane segment at 147–171 (FSAVLIFVVVWLTLSYIPIAHMVWG) threads the bilayer. Over 172-185 (GGLLASHGALDFAG) the chain is Periplasmic. Residues 186–201 (GTVVHINAAIAGLVGA) form a helical membrane-spanning segment. The Cytoplasmic portion of the chain corresponds to 202–221 (YLIGKRVGFGKEAFKPHNLP). A helical transmembrane segment spans residues 222–241 (MVFTGTAILYIGWFGFNAGS). Position 241 (Ser241) interacts with NH4(+). The Periplasmic segment spans residues 242–248 (AGTANEI). The helical transmembrane segment at 249–273 (AALAFVNTVVATAAAILGWIFGEWA) threads the bilayer. Residues 274–279 (LRGKPS) lie on the Cytoplasmic side of the membrane. Residues 280–300 (LLGACSGAIAGLVGVTPACGY) form a helical membrane-spanning segment. The Periplasmic portion of the chain corresponds to 301 to 302 (IG). The chain crosses the membrane as a helical span at residues 303–321 (VGGALIIGVVAGLAGLWGV). Over 322 to 333 (TMLKRLLRVDDP) the chain is Cytoplasmic. The chain crosses the membrane as a helical span at residues 334 to 355 (CDVFGVHGVCGIVGCIMTGIFA). Topologically, residues 356 to 370 (ASSLGGVGFAEGVTM) are periplasmic. A helical membrane pass occupies residues 371–399 (GHQLLVQLESIAITIVWSGVVAFIGYKLA). The Cytoplasmic segment spans residues 400 to 428 (DLTVGLRVPEEQEREGLDVNSHGENAYNA).

This sequence belongs to the ammonia transporter channel (TC 1.A.11.2) family. As to quaternary structure, homotrimer. In response to elevation of the extracellular ammonium concentration, interacts and forms a complex with GlnK.

The protein localises to the cell inner membrane. In the presence of high extracellular ammonium concentrations, transport activity is inhibited by interaction with the regulatory protein GlnK. Formation of the GlnK-AmtB complex is influenced by intracellular pools of the effector molecules ATP, ADP, Mg(2+) and 2-oxoglutarate. The GlnK-AmtB interaction is also controlled by the level of intracellular glutamine and the uridylylation status of GlnK. Functionally, involved in the uptake of ammonium/ammonia (NH(4)(+)/NH(3)). Transport is electrogenic. Following sequestration of NH(4)(+) at the periplasmic face, NH(4)(+) is deprotonated and neutral NH(3) is transported into the cytoplasm. Neutral NH(3) and charged H(+) are carried separately across the membrane on a unique two-lane pathway, before recombining to NH(4)(+) inside the cell. The sequence is that of Ammonium transporter AmtB (amtB) from Escherichia coli O157:H7.